Here is a 184-residue protein sequence, read N- to C-terminus: ATP synthase subunit b 1 (184 aa).

Residues leucine 4–serine 24 form a helical membrane-spanning segment.

It belongs to the ATPase B chain family. As to quaternary structure, F-type ATPases have 2 components, F(1) - the catalytic core - and F(0) - the membrane proton channel. F(1) has five subunits: alpha(3), beta(3), gamma(1), delta(1), epsilon(1). F(0) has three main subunits: a(1), b(2) and c(10-14). The alpha and beta chains form an alternating ring which encloses part of the gamma chain. F(1) is attached to F(0) by a central stalk formed by the gamma and epsilon chains, while a peripheral stalk is formed by the delta and b chains.

It is found in the cell inner membrane. Functionally, f(1)F(0) ATP synthase produces ATP from ADP in the presence of a proton or sodium gradient. F-type ATPases consist of two structural domains, F(1) containing the extramembraneous catalytic core and F(0) containing the membrane proton channel, linked together by a central stalk and a peripheral stalk. During catalysis, ATP synthesis in the catalytic domain of F(1) is coupled via a rotary mechanism of the central stalk subunits to proton translocation. Component of the F(0) channel, it forms part of the peripheral stalk, linking F(1) to F(0). The sequence is that of ATP synthase subunit b 1 from Cereibacter sphaeroides (strain ATCC 17023 / DSM 158 / JCM 6121 / CCUG 31486 / LMG 2827 / NBRC 12203 / NCIMB 8253 / ATH 2.4.1.) (Rhodobacter sphaeroides).